The following is a 545-amino-acid chain: Bifunctional purine biosynthesis protein PurH (545 aa).

Positions 1–150 (MTNTNRPIRR…KNHATVAIVT (150 aa)) constitute an MGS-like domain.

The protein belongs to the PurH family.

It catalyses the reaction (6R)-10-formyltetrahydrofolate + 5-amino-1-(5-phospho-beta-D-ribosyl)imidazole-4-carboxamide = 5-formamido-1-(5-phospho-D-ribosyl)imidazole-4-carboxamide + (6S)-5,6,7,8-tetrahydrofolate. The catalysed reaction is IMP + H2O = 5-formamido-1-(5-phospho-D-ribosyl)imidazole-4-carboxamide. Its pathway is purine metabolism; IMP biosynthesis via de novo pathway; 5-formamido-1-(5-phospho-D-ribosyl)imidazole-4-carboxamide from 5-amino-1-(5-phospho-D-ribosyl)imidazole-4-carboxamide (10-formyl THF route): step 1/1. It participates in purine metabolism; IMP biosynthesis via de novo pathway; IMP from 5-formamido-1-(5-phospho-D-ribosyl)imidazole-4-carboxamide: step 1/1. This chain is Bifunctional purine biosynthesis protein PurH, found in Bifidobacterium longum (strain NCC 2705).